The sequence spans 101 residues: Cilia- and flagella-associated protein 141 (101 aa).

In terms of assembly, microtubule inner protein component of sperm flagellar doublet microtubules. Expressed in airway epithelial cells.

Its subcellular location is the cytoplasm. The protein localises to the cytoskeleton. It is found in the cilium axoneme. The protein resides in the flagellum axoneme. Its function is as follows. Microtubule inner protein (MIP) part of the dynein-decorated doublet microtubules (DMTs) in cilia axoneme, which is required for motile cilia beating. The polypeptide is Cilia- and flagella-associated protein 141 (Homo sapiens (Human)).